The primary structure comprises 541 residues: Probable malate:quinone oxidoreductase (541 aa).

Residues alanine 520–leucine 541 form a disordered region.

It belongs to the MQO family. The cofactor is FAD.

The catalysed reaction is (S)-malate + a quinone = a quinol + oxaloacetate. Its pathway is carbohydrate metabolism; tricarboxylic acid cycle; oxaloacetate from (S)-malate (quinone route): step 1/1. This Ralstonia nicotianae (strain ATCC BAA-1114 / GMI1000) (Ralstonia solanacearum) protein is Probable malate:quinone oxidoreductase.